The following is a 442-amino-acid chain: Glycolipid 2-alpha-mannosyltransferase (442 aa).

Topologically, residues methionine 1–arginine 11 are cytoplasmic. Residues phenylalanine 12–serine 30 traverse the membrane as a helical; Signal-anchor for type II membrane protein segment. The stem region stretch occupies residues arginine 31–alanine 118. The Lumenal portion of the chain corresponds to arginine 31–glutamate 442. The disordered stretch occupies residues glutamate 68 to glutamate 95. A compositionally biased stretch (basic and acidic residues) spans glutamate 85 to glutamate 95. The tract at residues glycine 119 to glutamate 442 is catalytic. N-linked (GlcNAc...) asparagine glycosylation is present at asparagine 197. The active-site Nucleophile is glutamate 329.

The protein belongs to the glycosyltransferase 15 family. Mn(2+) is required as a cofactor.

The protein localises to the golgi apparatus membrane. Its pathway is protein modification; protein glycosylation. Its function is as follows. Mannosyltransferase that transfers an alpha-D-mannosyl residue from GDP-mannose into lipid-linked oligosaccharide, forming an alpha-(1-&gt;2)-D-mannosyl-D-mannose linkage. Required for the attachment of the third mannose residue of O-linked saccharides. In Saccharomyces cerevisiae (strain ATCC 204508 / S288c) (Baker's yeast), this protein is Glycolipid 2-alpha-mannosyltransferase (KRE2).